The chain runs to 294 residues: Sulfotransferase 1E1 (294 aa).

Position 47 to 52 (47 to 52 (KSGTTW)) interacts with 3'-phosphoadenylyl sulfate. 105 to 107 (KTH) is a substrate binding site. Residue His107 is the Proton acceptor of the active site. 3'-phosphoadenylyl sulfate-binding positions include Arg129, Ser137, Tyr192, 226–231 (TSFQEM), and 256–258 (RKG).

It belongs to the sulfotransferase 1 family. Homodimer. In terms of tissue distribution, liver, intestine and at lower level in the kidney.

Its subcellular location is the cytoplasm. The protein resides in the cytosol. The enzyme catalyses estrone + 3'-phosphoadenylyl sulfate = estrone 3-sulfate + adenosine 3',5'-bisphosphate + H(+). It carries out the reaction (24S)-hydroxycholesterol + 3'-phosphoadenylyl sulfate = (24S)-hydroxycholesterol 3-sulfate + adenosine 3',5'-bisphosphate + H(+). The catalysed reaction is 17beta-estradiol + 3'-phosphoadenylyl sulfate = 17beta-estradiol 3-sulfate + adenosine 3',5'-bisphosphate + H(+). It catalyses the reaction 3beta-hydroxyandrost-5-en-17-one + 3'-phosphoadenylyl sulfate = dehydroepiandrosterone 3-sulfate + adenosine 3',5'-bisphosphate + H(+). The enzyme catalyses 4-ethylphenol + 3'-phosphoadenylyl sulfate = 4-ethylphenyl sulfate + adenosine 3',5'-bisphosphate + H(+). Its activity is regulated as follows. Inhibited by estradiol. In terms of biological role, sulfotransferase that utilizes 3'-phospho-5'-adenylyl sulfate (PAPS) as sulfonate donor to catalyze the sulfate conjugation of estradiol and estrone. Is a key enzyme in estrogen homeostasis, the sulfation of estrogens leads to their inactivation. Also sulfates dehydroepiandrosterone (DHEA), pregnenolone, (24S)-hydroxycholesterol and xenobiotic compounds like ethinylestradiol, equalenin, diethyl stilbesterol and 1-naphthol at significantly lower efficiency. Does not sulfonate cortisol, testosterone and dopamine. May play a role in gut microbiota-host metabolic interaction. O-sulfonates 4-ethylphenol (4-EP), a dietary tyrosine-derived metabolite produced by gut bacteria. The product 4-EPS crosses the blood-brain barrier and may negatively regulate oligodendrocyte maturation and myelination, affecting the functional connectivity of different brain regions associated with the limbic system. This is Sulfotransferase 1E1 (SULT1E1) from Homo sapiens (Human).